The chain runs to 40 residues: Sulfur globule protein TR2 (40 aa).

To C.vinosum CV3. In terms of assembly, the protein envelope of the sulfur globules is composed of the three different proteins TR0, TR1 and TR2.

Its function is as follows. Structural protein of the sulfur globules, which are intracellular globules that serve for sulfur storage in purple sulfur bacteria. The polypeptide is Sulfur globule protein TR2 (Thiocapsa roseopersicina).